The sequence spans 20 residues: L-amino-acid oxidase L2 (20 aa).

Belongs to the flavin monoamine oxidase family. FIG1 subfamily. As to quaternary structure, monomer. This is in contrast with most of its orthologs, that are non-covalently linked homodimers. Requires FAD as cofactor. In terms of processing, N-glycosylated. In terms of tissue distribution, expressed by the venom gland.

It localises to the secreted. It carries out the reaction an L-alpha-amino acid + O2 + H2O = a 2-oxocarboxylate + H2O2 + NH4(+). The enzyme catalyses L-leucine + O2 + H2O = 4-methyl-2-oxopentanoate + H2O2 + NH4(+). The catalysed reaction is L-phenylalanine + O2 + H2O = 3-phenylpyruvate + H2O2 + NH4(+). It catalyses the reaction L-tryptophan + O2 + H2O = indole-3-pyruvate + H2O2 + NH4(+). It carries out the reaction L-methionine + O2 + H2O = 4-methylsulfanyl-2-oxobutanoate + H2O2 + NH4(+). The enzyme catalyses L-isoleucine + O2 + H2O = (S)-3-methyl-2-oxopentanoate + H2O2 + NH4(+). The catalysed reaction is L-tyrosine + O2 + H2O = 3-(4-hydroxyphenyl)pyruvate + H2O2 + NH4(+). Its function is as follows. Catalyzes an oxidative deamination of predominantly hydrophobic and aromatic L-amino acids, thus producing hydrogen peroxide that may contribute to the diverse toxic effects of this enzyme. Is active on L-Ile, L-Leu, L-Met, L-Phe, L-Trp, and L-Tyr. Exhibits diverse biological activities, such as hemorrhage, hemolysis, edema, apoptosis of vascular endothelial cells or tumor cell lines, antibacterial and antiparasitic activities, as well as regulation of platelet aggregation. Its effect on platelets is controversial, since it either induces aggregation or inhibits agonist-induced aggregation. These different effects are probably due to different experimental conditions. In Daboia russelii (Russel's viper), this protein is L-amino-acid oxidase L2.